The following is a 1111-amino-acid chain: Putative leucine--tRNA ligase, cytoplasmic (1111 aa).

The 'HIGH' region motif lies at 74-84; that stretch reads PYMNGALHLGH. Serine 460 bears the Phosphoserine mark. The 'KMSKS' region motif lies at 737–741; the sequence is KMSKS. Residue lysine 740 coordinates ATP.

The protein belongs to the class-I aminoacyl-tRNA synthetase family.

It localises to the cytoplasm. It carries out the reaction tRNA(Leu) + L-leucine + ATP = L-leucyl-tRNA(Leu) + AMP + diphosphate. The chain is Putative leucine--tRNA ligase, cytoplasmic (lrs1) from Schizosaccharomyces pombe (strain 972 / ATCC 24843) (Fission yeast).